Consider the following 100-residue polypeptide: Serine protease inhibitor 1 protein (100 aa).

The first 20 residues, 1–20, serve as a signal peptide directing secretion; the sequence is MKHLLIVSLVFVTIIWKIEC. 5 disulfide bridges follow: cysteine 42-cysteine 74, cysteine 51-cysteine 69, cysteine 54-cysteine 65, cysteine 58-cysteine 93, and cysteine 76-cysteine 90. Residues 42 to 93 enclose the TIL domain; sequence CGLNEVWMVCSSCEEECGKTPQPCPRICQPARCQCPAHKGYRRDGQGNCIFC.

Its subcellular location is the secreted. The chain is Serine protease inhibitor 1 protein from Caenorhabditis elegans.